The following is a 228-amino-acid chain: N-(5'-phosphoribosyl)anthranilate isomerase (228 aa).

The protein belongs to the TrpF family.

It carries out the reaction N-(5-phospho-beta-D-ribosyl)anthranilate = 1-(2-carboxyphenylamino)-1-deoxy-D-ribulose 5-phosphate. It functions in the pathway amino-acid biosynthesis; L-tryptophan biosynthesis; L-tryptophan from chorismate: step 3/5. This chain is N-(5'-phosphoribosyl)anthranilate isomerase, found in Azorhizobium caulinodans (strain ATCC 43989 / DSM 5975 / JCM 20966 / LMG 6465 / NBRC 14845 / NCIMB 13405 / ORS 571).